The following is a 439-amino-acid chain: Proline--tRNA ligase (439 aa).

The protein belongs to the class-II aminoacyl-tRNA synthetase family. ProS type 2 subfamily. Homodimer.

Its subcellular location is the cytoplasm. The catalysed reaction is tRNA(Pro) + L-proline + ATP = L-prolyl-tRNA(Pro) + AMP + diphosphate. In terms of biological role, catalyzes the attachment of proline to tRNA(Pro) in a two-step reaction: proline is first activated by ATP to form Pro-AMP and then transferred to the acceptor end of tRNA(Pro). This Rhodopseudomonas palustris (strain BisB5) protein is Proline--tRNA ligase.